A 226-amino-acid chain; its full sequence is UPF0758 protein SUB0843 (226 aa).

Positions 103-225 constitute an MPN domain; sequence QILSSYQVAK…YYSFREKSDI (123 aa). Residues histidine 174, histidine 176, and aspartate 187 each coordinate Zn(2+). Residues 174-187 carry the JAMM motif motif; the sequence is HNHPSGLTNPSEND.

This sequence belongs to the UPF0758 family.

This Streptococcus uberis (strain ATCC BAA-854 / 0140J) protein is UPF0758 protein SUB0843.